We begin with the raw amino-acid sequence, 346 residues long: 3-dehydroquinate synthase (346 aa).

NAD(+) contacts are provided by residues 61-66 (DGEAYK), 95-99 (GVIGD), 119-120 (TT), Lys132, and Lys141. Zn(2+) is bound by residues Glu174, His233, and His250.

Belongs to the sugar phosphate cyclases superfamily. Dehydroquinate synthase family. NAD(+) is required as a cofactor. Co(2+) serves as cofactor. The cofactor is Zn(2+).

It localises to the cytoplasm. It carries out the reaction 7-phospho-2-dehydro-3-deoxy-D-arabino-heptonate = 3-dehydroquinate + phosphate. The protein operates within metabolic intermediate biosynthesis; chorismate biosynthesis; chorismate from D-erythrose 4-phosphate and phosphoenolpyruvate: step 2/7. In terms of biological role, catalyzes the conversion of 3-deoxy-D-arabino-heptulosonate 7-phosphate (DAHP) to dehydroquinate (DHQ). The polypeptide is 3-dehydroquinate synthase (Wolinella succinogenes (strain ATCC 29543 / DSM 1740 / CCUG 13145 / JCM 31913 / LMG 7466 / NCTC 11488 / FDC 602W) (Vibrio succinogenes)).